Consider the following 98-residue polypeptide: Co-chaperonin GroES (98 aa).

Belongs to the GroES chaperonin family. As to quaternary structure, heptamer of 7 subunits arranged in a ring. Interacts with the chaperonin GroEL.

The protein resides in the cytoplasm. Functionally, together with the chaperonin GroEL, plays an essential role in assisting protein folding. The GroEL-GroES system forms a nano-cage that allows encapsulation of the non-native substrate proteins and provides a physical environment optimized to promote and accelerate protein folding. GroES binds to the apical surface of the GroEL ring, thereby capping the opening of the GroEL channel. This is Co-chaperonin GroES from Bartonella quintana (strain Toulouse) (Rochalimaea quintana).